The following is a 388-amino-acid chain: Na(+)/H(+) antiporter NhaA (388 aa).

Residues 1-11 (MKHLHRFFSSD) are Cytoplasmic-facing. A helical transmembrane segment spans residues 12–31 (ASGGIILIIAAILAMIMANS). Residues 32-58 (GATSGWYHDFLETPVQLRVGSLEINKN) are Periplasmic-facing. The important for dimerization stretch occupies residues 45–58 (PVQLRVGSLEINKN). A helical membrane pass occupies residues 59–80 (MLLWINDALMAVFFLLVGLEVK). Residues 81–96 (RELMQGSLASLRQAAF) lie on the Cytoplasmic side of the membrane. Residues 97–116 (PVIAAIGGMIVPALLYLAFN) form a helical membrane-spanning segment. The Periplasmic portion of the chain corresponds to 117-122 (YADPIT). The chain crosses the membrane as a helical span at residues 123 to 130 (REGWAIPA). Over 131–154 (ATDIAFALGVLALLGSRVPLALKI) the chain is Cytoplasmic. The chain crosses the membrane as a helical span at residues 155-176 (FLMALAIIDDLGAIIIIALFYT). Topologically, residues 177–180 (NDLS) are periplasmic. The helical transmembrane segment at 181-200 (MASLGVAAVAIAVLAVLNLC) threads the bilayer. Residues 201–204 (GARR) lie on the Cytoplasmic side of the membrane. A helical membrane pass occupies residues 205–222 (TGVYILVGVVLWTAVLKS). Gly223 is a topological domain (periplasmic). Residues 224–236 (VHATLAGVIVGFF) traverse the membrane as a helical segment. The Cytoplasmic segment spans residues 237–253 (IPLKEKHGRSPAKRLEH). A helical membrane pass occupies residues 254-272 (VLHPWVAYLILPLFAFANA). Over 273–286 (GVSLQGVTLDGLTS) the chain is Periplasmic. The chain crosses the membrane as a helical span at residues 287 to 310 (ILPLGIIAGLLIGKPLGISLFCWL). At 311–339 (ALRLKLAHLPEGTTYQQIMVVGILCGIGF) the chain is on the cytoplasmic side. The chain crosses the membrane as a helical span at residues 340–350 (TMSIFIASLAF). Residues 351–357 (GSVDPEL) are Periplasmic-facing. A helical membrane pass occupies residues 358–380 (INWAKLGILVGSISSAVIGYSWL). The Cytoplasmic segment spans residues 381–388 (RVRLRPSV).

The protein belongs to the NhaA Na(+)/H(+) (TC 2.A.33) antiporter family. In terms of assembly, monomer. Homodimer. Under routine stress conditions, the monomeric form is fully functional. However, the dimeric form is much more efficient in conferring growth resistance under extreme stress conditions.

The protein resides in the cell inner membrane. The enzyme catalyses Na(+)(in) + 2 H(+)(out) = Na(+)(out) + 2 H(+)(in). The catalysed reaction is Li(+)(in) + 2 H(+)(out) = Li(+)(out) + 2 H(+)(in). Its activity is regulated as follows. Activity is regulated by pH. Active at alkaline pH. Activity is strongly down-regulated below pH 6.5 and a dramatic increase in activity is observed upon increase of the pH from 6.5 to 8.5. Functionally, na(+)/H(+) antiporter that extrudes sodium in exchange for external protons. Plays an important role in the regulation of intracellular pH, cellular Na(+) content and cell volume. Catalyzes the exchange of 2 H(+) per Na(+). This stoichiometry applies at both neutral and alkaline pH values. In addition, can also transport lithium and is involved in lithium detoxification. Binding of the Li(+) and H(+) ligands to NhaA is coupled and antagonistic. The polypeptide is Na(+)/H(+) antiporter NhaA (Escherichia coli (strain K12)).